The primary structure comprises 138 residues: Cellular retinoic acid-binding protein 2 (138 aa).

The Nuclear localization signal signature appears at Lys-21–Lys-31. Residue Lys-102 forms a Glycyl lysine isopeptide (Lys-Gly) (interchain with G-Cter in SUMO) linkage. Arg-133–Tyr-135 is an all-trans-retinoate binding site.

It belongs to the calycin superfamily. Fatty-acid binding protein (FABP) family. In terms of assembly, interacts with RXR and RARA. Interacts with importin alpha. Post-translationally, sumoylated in response to retinoic acid binding, sumoylation is critical for dissociation from ER and subsequent nuclear translocation.

Its subcellular location is the cytoplasm. The protein resides in the endoplasmic reticulum. It localises to the nucleus. Its function is as follows. Transports retinoic acid to the nucleus. Regulates the access of retinoic acid to the nuclear retinoic acid receptors. The polypeptide is Cellular retinoic acid-binding protein 2 (CRABP2) (Homo sapiens (Human)).